Consider the following 584-residue polypeptide: AAA ATPase forming ring-shaped complexes (584 aa).

The stretch at Ala10–His96 forms a coiled coil. The disordered stretch occupies residues His40 to Ala66. Gly292–Met297 contacts ATP.

It belongs to the AAA ATPase family. In terms of assembly, homohexamer. Assembles into a hexameric ring structure.

In Micrococcus luteus (strain ATCC 4698 / DSM 20030 / JCM 1464 / CCM 169 / CCUG 5858 / IAM 1056 / NBRC 3333 / NCIMB 9278 / NCTC 2665 / VKM Ac-2230) (Micrococcus lysodeikticus), this protein is AAA ATPase forming ring-shaped complexes.